A 162-amino-acid polypeptide reads, in one-letter code: uncharacterized protein (162 aa).

This is an uncharacterized protein from Methanocaldococcus jannaschii (strain ATCC 43067 / DSM 2661 / JAL-1 / JCM 10045 / NBRC 100440) (Methanococcus jannaschii).